The following is a 224-amino-acid chain: Inhibitor of apoptosis protein (224 aa).

Residues 29–92 form a BIR repeat; the sequence is VDARNKSFAI…GFWSRNCGFM (64 aa). The Zn(2+) site is built by C62, C65, H82, and C89. Residues 189–207 form a C4-type zinc finger; that stretch reads CMTCGIEQINKDENFCSAC.

This sequence belongs to the asfivirus IAP family. Interacts with subunit p17 of host CASP3.

The protein resides in the host cytoplasm. It localises to the virion. Prevents apoptosis of host cell by inhibiting caspase-3/CASP3 activation to promote the viral replication. Also induces the activation of host NF-kappaB. This is Inhibitor of apoptosis protein from Ornithodoros (relapsing fever ticks).